The sequence spans 132 residues: Large ribosomal subunit protein uL14 (132 aa).

Belongs to the universal ribosomal protein uL14 family. In terms of assembly, part of the 50S ribosomal subunit. Forms a cluster with proteins L3 and L24e, part of which may contact the 16S rRNA in 2 intersubunit bridges.

Binds to 23S rRNA. Forms part of two intersubunit bridges in the 70S ribosome. In Methanosphaera stadtmanae (strain ATCC 43021 / DSM 3091 / JCM 11832 / MCB-3), this protein is Large ribosomal subunit protein uL14.